Consider the following 243-residue polypeptide: UPF0758 protein Ava_0172 (243 aa).

The MPN domain occupies 113 to 235; the sequence is PIDSPVAAVA…HQSLREVTTL (123 aa). Residues His184, His186, and Asp197 each contribute to the Zn(2+) site. Residues 184–197 carry the JAMM motif motif; the sequence is HNHPSGNVEPSPED.

The protein belongs to the UPF0758 family.

This Trichormus variabilis (strain ATCC 29413 / PCC 7937) (Anabaena variabilis) protein is UPF0758 protein Ava_0172.